Here is a 540-residue protein sequence, read N- to C-terminus: 2-isopropylmalate synthase (540 aa).

Residues 8-271 (VLIFDTTLRD…NPFFGRESDS (264 aa)) form the Pyruvate carboxyltransferase domain. Mn(2+)-binding residues include D17, H208, H210, and N244. Residues 408 to 540 (QLRLVQVSCG…AVLADRRPGI (133 aa)) are regulatory domain.

Belongs to the alpha-IPM synthase/homocitrate synthase family. LeuA type 1 subfamily. Homodimer. The cofactor is Mn(2+).

Its subcellular location is the cytoplasm. It catalyses the reaction 3-methyl-2-oxobutanoate + acetyl-CoA + H2O = (2S)-2-isopropylmalate + CoA + H(+). The protein operates within amino-acid biosynthesis; L-leucine biosynthesis; L-leucine from 3-methyl-2-oxobutanoate: step 1/4. Catalyzes the condensation of the acetyl group of acetyl-CoA with 3-methyl-2-oxobutanoate (2-ketoisovalerate) to form 3-carboxy-3-hydroxy-4-methylpentanoate (2-isopropylmalate). In Prochlorococcus marinus (strain MIT 9303), this protein is 2-isopropylmalate synthase.